Consider the following 65-residue polypeptide: Large ribosomal subunit protein bL35 (65 aa).

This sequence belongs to the bacterial ribosomal protein bL35 family.

The chain is Large ribosomal subunit protein bL35 from Ruminiclostridium cellulolyticum (strain ATCC 35319 / DSM 5812 / JCM 6584 / H10) (Clostridium cellulolyticum).